Consider the following 864-residue polypeptide: Probable M1 family aminopeptidase 1 (864 aa).

Substrate-binding positions include Glu149 and 289–293 (GAMEN). His325 lines the Zn(2+) pocket. Residue Glu326 is the Proton acceptor of the active site. Zn(2+) contacts are provided by His329 and Glu348.

This sequence belongs to the peptidase M1 family. Zn(2+) is required as a cofactor.

This Encephalitozoon cuniculi (strain GB-M1) (Microsporidian parasite) protein is Probable M1 family aminopeptidase 1.